The primary structure comprises 320 residues: Methionyl-tRNA formyltransferase (320 aa).

Ser-114 to Pro-117 contacts (6S)-5,6,7,8-tetrahydrofolate.

The protein belongs to the Fmt family.

It carries out the reaction L-methionyl-tRNA(fMet) + (6R)-10-formyltetrahydrofolate = N-formyl-L-methionyl-tRNA(fMet) + (6S)-5,6,7,8-tetrahydrofolate + H(+). Functionally, attaches a formyl group to the free amino group of methionyl-tRNA(fMet). The formyl group appears to play a dual role in the initiator identity of N-formylmethionyl-tRNA by promoting its recognition by IF2 and preventing the misappropriation of this tRNA by the elongation apparatus. This is Methionyl-tRNA formyltransferase from Acinetobacter baumannii (strain SDF).